The primary structure comprises 765 residues: Eukaryotic translation initiation factor 3 subunit B (765 aa).

A sufficient for interaction with HCR1 and TIF32 region spans residues 1 to 136 (MKNFLPRTLK…LFVECGSMND (136 aa)). The tract at residues 28-261 (RNTQLKRSKI…GVTAWGGPNF (234 aa)) is sufficient for interaction with PIC8. Position 61 is a phosphoserine (Ser-61). Tyr-67 carries the post-translational modification Phosphotyrosine. The RRM domain maps to 77–162 (QYIVVNGAPV…HRLFLYTMKD (86 aa)). Ser-671 is subject to Phosphoserine.

It belongs to the eIF-3 subunit B family. Component of the eukaryotic translation initiation factor 3 (eIF-3) complex.

It is found in the cytoplasm. In terms of biological role, RNA-binding component of the eukaryotic translation initiation factor 3 (eIF-3) complex, which is involved in protein synthesis of a specialized repertoire of mRNAs and, together with other initiation factors, stimulates binding of mRNA and methionyl-tRNAi to the 40S ribosome. The eIF-3 complex specifically targets and initiates translation of a subset of mRNAs involved in cell proliferation. The protein is Eukaryotic translation initiation factor 3 subunit B of Saccharomyces cerevisiae (strain YJM789) (Baker's yeast).